A 340-amino-acid chain; its full sequence is UPF0324 membrane protein OB3406 (340 aa).

Helical transmembrane passes span 12–31 (SFYTGIGITLAIALVAGVLC), 36–58 (LDIMGQLVLAIMIGMIWGHTIGL), 94–116 (GLHAFLYAGLLLTVALVTVYSLA), 126–148 (SILTACGTAICGAAAIVAIAPLV), 155–177 (TAVSVAVIAVLGTMFTLIYTMMY), 215–237 (IAIVVKLTRVALLVPVAILIGIY), 257–276 (IPWFIFGFLAMSAVNTIGFL), 281–303 (VNLLISLAYLLLSMAMAGLGLNV), and 315–337 (VFFAGLLGTLILIGCGFGLIYVM).

Belongs to the UPF0324 family.

Its subcellular location is the cell membrane. This chain is UPF0324 membrane protein OB3406, found in Oceanobacillus iheyensis (strain DSM 14371 / CIP 107618 / JCM 11309 / KCTC 3954 / HTE831).